A 207-amino-acid chain; its full sequence is Putative zinc finger protein 137 (207 aa).

The C2H2-type 1 zinc-finger motif lies at 72-94; the sequence is CKCNDCHKVFSNATTIANHWRIH. Residues 100-122 form a C2H2-type 2; degenerate zinc finger; the sequence is YKCNKCGKIFRHRSYLAVYQRTH. Residues 128–150 form a C2H2-type 3; degenerate zinc finger; the sequence is YKYHDCGKVFSQASSYAKHRRIH. C2H2-type zinc fingers lie at residues 156–178 and 184–206; these read HKCDDCGKVLTSRSHLIRHQRIH and YKCLKCGKVFSLWALHAEHQKIH.

This sequence belongs to the krueppel C2H2-type zinc-finger protein family.

It is found in the nucleus. Functionally, may be involved in transcriptional regulation. In Homo sapiens (Human), this protein is Putative zinc finger protein 137 (ZNF137P).